We begin with the raw amino-acid sequence, 252 residues long: Type III pantothenate kinase (252 aa).

6 to 13 (DIGNTNTV) is a binding site for ATP. Residue 105 to 108 (GADR) participates in substrate binding. Aspartate 107 functions as the Proton acceptor in the catalytic mechanism. Position 127 (aspartate 127) interacts with K(+). Residue threonine 130 participates in ATP binding. Threonine 182 contacts substrate.

It belongs to the type III pantothenate kinase family. Homodimer. NH4(+) is required as a cofactor. It depends on K(+) as a cofactor.

The protein localises to the cytoplasm. The enzyme catalyses (R)-pantothenate + ATP = (R)-4'-phosphopantothenate + ADP + H(+). It participates in cofactor biosynthesis; coenzyme A biosynthesis; CoA from (R)-pantothenate: step 1/5. In terms of biological role, catalyzes the phosphorylation of pantothenate (Pan), the first step in CoA biosynthesis. The sequence is that of Type III pantothenate kinase from Salinispora arenicola (strain CNS-205).